We begin with the raw amino-acid sequence, 177 residues long: Large ribosomal subunit protein uL6 (177 aa).

This sequence belongs to the universal ribosomal protein uL6 family. In terms of assembly, part of the 50S ribosomal subunit.

This protein binds to the 23S rRNA, and is important in its secondary structure. It is located near the subunit interface in the base of the L7/L12 stalk, and near the tRNA binding site of the peptidyltransferase center. This Serratia proteamaculans (strain 568) protein is Large ribosomal subunit protein uL6.